The primary structure comprises 273 residues: Dermonecrotic toxin LdSicTox-alphaIB3b (273 aa).

The active site involves His5. Residues Glu25 and Asp27 each contribute to the Mg(2+) site. Residue His41 is the Nucleophile of the active site. Cystine bridges form between Cys45–Cys51 and Cys47–Cys190. Asp85 serves as a coordination point for Mg(2+).

Belongs to the arthropod phospholipase D family. Class II subfamily. The cofactor is Mg(2+). In terms of tissue distribution, expressed by the venom gland.

The protein resides in the secreted. It catalyses the reaction an N-(acyl)-sphingosylphosphocholine = an N-(acyl)-sphingosyl-1,3-cyclic phosphate + choline. The enzyme catalyses an N-(acyl)-sphingosylphosphoethanolamine = an N-(acyl)-sphingosyl-1,3-cyclic phosphate + ethanolamine. It carries out the reaction a 1-acyl-sn-glycero-3-phosphocholine = a 1-acyl-sn-glycero-2,3-cyclic phosphate + choline. The catalysed reaction is a 1-acyl-sn-glycero-3-phosphoethanolamine = a 1-acyl-sn-glycero-2,3-cyclic phosphate + ethanolamine. Functionally, dermonecrotic toxins cleave the phosphodiester linkage between the phosphate and headgroup of certain phospholipids (sphingolipid and lysolipid substrates), forming an alcohol (often choline) and a cyclic phosphate. This toxin acts on sphingomyelin (SM). It may also act on ceramide phosphoethanolamine (CPE), lysophosphatidylcholine (LPC) and lysophosphatidylethanolamine (LPE), but not on lysophosphatidylserine (LPS), and lysophosphatidylglycerol (LPG). It acts by transphosphatidylation, releasing exclusively cyclic phosphate products as second products. Induces dermonecrosis, hemolysis, increased vascular permeability, edema, inflammatory response, and platelet aggregation. The polypeptide is Dermonecrotic toxin LdSicTox-alphaIB3b (Loxosceles deserta (Desert recluse spider)).